A 289-amino-acid polypeptide reads, in one-letter code: 3-methyl-2-oxobutanoate hydroxymethyltransferase (289 aa).

Mg(2+) is bound by residues D58 and D99. 3-methyl-2-oxobutanoate-binding positions include 58–59, D99, and K128; that span reads DS. E130 contributes to the Mg(2+) binding site. E197 functions as the Proton acceptor in the catalytic mechanism.

Belongs to the PanB family. In terms of assembly, homodecamer; pentamer of dimers. Mg(2+) is required as a cofactor.

The protein resides in the cytoplasm. It carries out the reaction 3-methyl-2-oxobutanoate + (6R)-5,10-methylene-5,6,7,8-tetrahydrofolate + H2O = 2-dehydropantoate + (6S)-5,6,7,8-tetrahydrofolate. It functions in the pathway cofactor biosynthesis; (R)-pantothenate biosynthesis; (R)-pantoate from 3-methyl-2-oxobutanoate: step 1/2. In terms of biological role, catalyzes the reversible reaction in which hydroxymethyl group from 5,10-methylenetetrahydrofolate is transferred onto alpha-ketoisovalerate to form ketopantoate. This chain is 3-methyl-2-oxobutanoate hydroxymethyltransferase, found in Leptothrix cholodnii (strain ATCC 51168 / LMG 8142 / SP-6) (Leptothrix discophora (strain SP-6)).